The sequence spans 383 residues: Probable mannan endo-1,4-beta-mannosidase A (383 aa).

Positions 1–21 (MKLSNALLTLASLALANVSTA) are cleaved as a signal peptide. Residue Asn17 is glycosylated (N-linked (GlcNAc...) asparagine). Trp92 contributes to the substrate binding site. N-linked (GlcNAc...) asparagine glycosylation occurs at Asn194. Position 205 (Asn205) interacts with substrate. Glu206 (proton donor) is an active-site residue. N-linked (GlcNAc...) asparagine glycosylation is present at Asn263. Position 281 (Tyr281) interacts with substrate. The active-site Nucleophile is the Glu314. A substrate-binding site is contributed by Trp344.

It belongs to the glycosyl hydrolase 5 (cellulase A) family.

Its subcellular location is the secreted. The catalysed reaction is Random hydrolysis of (1-&gt;4)-beta-D-mannosidic linkages in mannans, galactomannans and glucomannans.. Functionally, endo-1,4-mannanase, a crucial enzyme for depolymerization of seed galactomannans and wood galactoglucomannans. This Aspergillus niger (strain ATCC MYA-4892 / CBS 513.88 / FGSC A1513) protein is Probable mannan endo-1,4-beta-mannosidase A (manA).